The sequence spans 283 residues: Bifunctional protein FolD (283 aa).

Residues 165–167 (GAS) and serine 190 each bind NADP(+).

It belongs to the tetrahydrofolate dehydrogenase/cyclohydrolase family. Homodimer.

It catalyses the reaction (6R)-5,10-methylene-5,6,7,8-tetrahydrofolate + NADP(+) = (6R)-5,10-methenyltetrahydrofolate + NADPH. The enzyme catalyses (6R)-5,10-methenyltetrahydrofolate + H2O = (6R)-10-formyltetrahydrofolate + H(+). Its pathway is one-carbon metabolism; tetrahydrofolate interconversion. In terms of biological role, catalyzes the oxidation of 5,10-methylenetetrahydrofolate to 5,10-methenyltetrahydrofolate and then the hydrolysis of 5,10-methenyltetrahydrofolate to 10-formyltetrahydrofolate. This is Bifunctional protein FolD from Cupriavidus taiwanensis (strain DSM 17343 / BCRC 17206 / CCUG 44338 / CIP 107171 / LMG 19424 / R1) (Ralstonia taiwanensis (strain LMG 19424)).